The chain runs to 331 residues: Tryptophan--tRNA ligase 1 (331 aa).

ATP is bound by residues 9–11 (KPT) and 17–18 (GN). The 'HIGH' region motif lies at 10-18 (PTGHLTLGN). Position 137 (aspartate 137) interacts with L-tryptophan. ATP contacts are provided by residues 149–151 (GDD), valine 188, and 197–201 (KMGKS). The 'KMSKS' region signature appears at 197 to 201 (KMGKS).

The protein belongs to the class-I aminoacyl-tRNA synthetase family. As to quaternary structure, homodimer.

It localises to the cytoplasm. The catalysed reaction is tRNA(Trp) + L-tryptophan + ATP = L-tryptophyl-tRNA(Trp) + AMP + diphosphate + H(+). Its function is as follows. Catalyzes the attachment of tryptophan to tRNA(Trp). This chain is Tryptophan--tRNA ligase 1, found in Streptomyces avermitilis (strain ATCC 31267 / DSM 46492 / JCM 5070 / NBRC 14893 / NCIMB 12804 / NRRL 8165 / MA-4680).